Here is a 375-residue protein sequence, read N- to C-terminus: tRNA-specific 2-thiouridylase MnmA (375 aa).

ATP is bound by residues 16–23 and Met-42; that span reads GMSGGVDS. Residues 102 to 104 form an interaction with target base in tRNA region; that stretch reads NPD. Cys-107 serves as the catalytic Nucleophile. Cysteines 107 and 203 form a disulfide. ATP is bound at residue Gly-131. The interaction with tRNA stretch occupies residues 153-155; the sequence is KDQ. Cys-203 serves as the catalytic Cysteine persulfide intermediate. The interval 315–316 is interaction with tRNA; that stretch reads RY.

It belongs to the MnmA/TRMU family.

The protein resides in the cytoplasm. The catalysed reaction is S-sulfanyl-L-cysteinyl-[protein] + uridine(34) in tRNA + AH2 + ATP = 2-thiouridine(34) in tRNA + L-cysteinyl-[protein] + A + AMP + diphosphate + H(+). Catalyzes the 2-thiolation of uridine at the wobble position (U34) of tRNA, leading to the formation of s(2)U34. In Pseudomonas paraeruginosa (strain DSM 24068 / PA7) (Pseudomonas aeruginosa (strain PA7)), this protein is tRNA-specific 2-thiouridylase MnmA.